Consider the following 296-residue polypeptide: Glycine N-acyltransferase-like protein (296 aa).

The residue at position 41 (Lys-41) is an N6-acetyllysine; alternate. At Lys-41 the chain carries N6-succinyllysine; alternate. Lys-43 is modified (N6-acetyllysine). Residue Lys-48 is modified to N6-acetyllysine; alternate. Lys-48 bears the N6-succinyllysine; alternate mark. Lys-80 and Lys-83 each carry N6-acetyllysine. An N6-acetyllysine; alternate mark is found at Lys-183 and Lys-256. Lys-183 and Lys-256 each carry N6-succinyllysine; alternate.

Belongs to the glycine N-acyltransferase family.

It localises to the mitochondrion. The catalysed reaction is an acyl-CoA + glycine = an N-acylglycine + CoA + H(+). Mitochondrial acyltransferase which transfers the acyl group to the N-terminus of glycine. Can conjugate a multitude of substrates to form a variety of N-acylglycines. This is Glycine N-acyltransferase-like protein (Gm4952) from Mus musculus (Mouse).